We begin with the raw amino-acid sequence, 171 residues long: 3-hydroxydecanoyl-[acyl-carrier-protein] dehydratase (171 aa).

Residue His-70 is part of the active site.

It belongs to the thioester dehydratase family. FabA subfamily. In terms of assembly, homodimer.

The protein localises to the cytoplasm. The catalysed reaction is a (3R)-hydroxyacyl-[ACP] = a (2E)-enoyl-[ACP] + H2O. It catalyses the reaction (3R)-hydroxydecanoyl-[ACP] = (2E)-decenoyl-[ACP] + H2O. It carries out the reaction (2E)-decenoyl-[ACP] = (3Z)-decenoyl-[ACP]. Its pathway is lipid metabolism; fatty acid biosynthesis. Functionally, necessary for the introduction of cis unsaturation into fatty acids. Catalyzes the dehydration of (3R)-3-hydroxydecanoyl-ACP to E-(2)-decenoyl-ACP and then its isomerization to Z-(3)-decenoyl-ACP. Can catalyze the dehydratase reaction for beta-hydroxyacyl-ACPs with saturated chain lengths up to 16:0, being most active on intermediate chain length. The protein is 3-hydroxydecanoyl-[acyl-carrier-protein] dehydratase of Shewanella loihica (strain ATCC BAA-1088 / PV-4).